Reading from the N-terminus, the 266-residue chain is Undecaprenyl-diphosphatase (266 aa).

The next 8 membrane-spanning stretches (helical) occupy residues 1–21 (MDTFQVIILALIQGLTEFLPI), 39–59 (QGLSFDVAVNTGSLFAVVIYF), 87–107 (WWIILATLPAVFFGFIAKDFI), 111–131 (LRSAGVIAVTTIVFGLLLWWA), 149–169 (ALLIGFAQALALIPGTSRSGA), 183–203 (AAARFSFLMSVPVSLGAAILV), 218–238 (ALTLGTVISFVAAYLCIHYFL), and 246–266 (MTPFVIYRLILGAVLCGFIFL).

The protein belongs to the UppP family.

Its subcellular location is the cell inner membrane. The catalysed reaction is di-trans,octa-cis-undecaprenyl diphosphate + H2O = di-trans,octa-cis-undecaprenyl phosphate + phosphate + H(+). Its function is as follows. Catalyzes the dephosphorylation of undecaprenyl diphosphate (UPP). Confers resistance to bacitracin. This is Undecaprenyl-diphosphatase from Shewanella sp. (strain MR-4).